Here is a 95-residue protein sequence, read N- to C-terminus: Large ribosomal subunit protein bL27 (95 aa).

The propeptide occupies 1 to 10; it reads MRFILNLQFF.

Belongs to the bacterial ribosomal protein bL27 family. Post-translationally, the N-terminus is cleaved by ribosomal processing cysteine protease Prp.

This is Large ribosomal subunit protein bL27 from Mesoplasma florum (strain ATCC 33453 / NBRC 100688 / NCTC 11704 / L1) (Acholeplasma florum).